The chain runs to 189 residues: Putative manganese efflux pump MntP (189 aa).

6 consecutive transmembrane segments (helical) span residues 3 to 23 (PVSLIFLAFAMSTDAFAAAIG), 41 to 61 (IIFGVIEAITPLVGWLLGQAA), 65 to 85 (VADWDHWIAFVLLVLLGLHMI), 106 to 128 (WILAVTALATSIDALAVGVGLAF), 141 to 161 (GLATMTMVTLGTMLGRALGAV), and 168 to 188 (MVGGVVLILVGATILYEHLSA).

The protein belongs to the MntP (TC 9.B.29) family.

The protein localises to the cell inner membrane. In terms of biological role, probably functions as a manganese efflux pump. This chain is Putative manganese efflux pump MntP, found in Pseudomonas aeruginosa (strain LESB58).